Consider the following 156-residue polypeptide: Putative NrdI-like protein (156 aa).

The polypeptide is Putative NrdI-like protein (Streptococcus pneumoniae (strain ATCC BAA-255 / R6)).